Here is a 266-residue protein sequence, read N- to C-terminus: Chymotrypsin-like elastase family member 1 (266 aa).

A signal peptide spans 1–16 (MLRFLVLATLVLYGHS). Residues 17–26 (TRDFPETNAR) constitute a propeptide, activation peptide. The region spanning 27 to 264 (VVGGTEARKN…YISWINNVIA (238 aa)) is the Peptidase S1 domain. Cys56 and Cys72 are oxidised to a cystine. Residue His71 is the Charge relay system of the active site. Residues Glu85, Asn87, Gln90, and Glu95 each coordinate Ca(2+). Asn87 carries an N-linked (GlcNAc...) asparagine glycan. Asp119 functions as the Charge relay system in the catalytic mechanism. Disulfide bonds link Cys153/Cys220, Cys184/Cys200, and Cys210/Cys240. Residue Ser214 is the Charge relay system of the active site. N-linked (GlcNAc...) asparagine glycosylation is present at Asn241.

Belongs to the peptidase S1 family. Elastase subfamily. It depends on Ca(2+) as a cofactor.

It localises to the secreted. It catalyses the reaction Hydrolysis of proteins, including elastin. Preferential cleavage: Ala-|-Xaa.. In terms of biological role, serine proteases that hydrolyze many proteins in addition to elastin. In Felis catus (Cat), this protein is Chymotrypsin-like elastase family member 1 (CELA1).